The sequence spans 404 residues: Argininosuccinate synthase (404 aa).

ATP contacts are provided by residues 10–18 (AYSGGLDTS) and Ala-37. L-citrulline is bound by residues Tyr-90 and Ser-95. Gly-120 provides a ligand contact to ATP. Positions 122, 126, and 127 each coordinate L-aspartate. Asn-126 provides a ligand contact to L-citrulline. Residues Arg-130, Ser-181, Ser-190, Glu-266, and Tyr-278 each contribute to the L-citrulline site.

This sequence belongs to the argininosuccinate synthase family. Type 1 subfamily. As to quaternary structure, homotetramer.

It is found in the cytoplasm. The catalysed reaction is L-citrulline + L-aspartate + ATP = 2-(N(omega)-L-arginino)succinate + AMP + diphosphate + H(+). It participates in amino-acid biosynthesis; L-arginine biosynthesis; L-arginine from L-ornithine and carbamoyl phosphate: step 2/3. The protein is Argininosuccinate synthase of Erythrobacter litoralis (strain HTCC2594).